The following is a 319-amino-acid chain: Acetyl-coenzyme A carboxylase carboxyl transferase subunit alpha (319 aa).

A CoA carboxyltransferase C-terminal domain is found at 35 to 296 (DLEKEIKQLE…KQRLLEQLKE (262 aa)).

The protein belongs to the AccA family. In terms of assembly, acetyl-CoA carboxylase is a heterohexamer composed of biotin carboxyl carrier protein (AccB), biotin carboxylase (AccC) and two subunits each of ACCase subunit alpha (AccA) and ACCase subunit beta (AccD).

It localises to the cytoplasm. The catalysed reaction is N(6)-carboxybiotinyl-L-lysyl-[protein] + acetyl-CoA = N(6)-biotinyl-L-lysyl-[protein] + malonyl-CoA. The protein operates within lipid metabolism; malonyl-CoA biosynthesis; malonyl-CoA from acetyl-CoA: step 1/1. Functionally, component of the acetyl coenzyme A carboxylase (ACC) complex. First, biotin carboxylase catalyzes the carboxylation of biotin on its carrier protein (BCCP) and then the CO(2) group is transferred by the carboxyltransferase to acetyl-CoA to form malonyl-CoA. The sequence is that of Acetyl-coenzyme A carboxylase carboxyl transferase subunit alpha from Aliivibrio fischeri (strain MJ11) (Vibrio fischeri).